The chain runs to 725 residues: Phosphoribosylformylglycinamidine synthase subunit PurL (725 aa).

The active site involves His42. ATP-binding residues include Tyr45 and Lys84. Glu86 contacts Mg(2+). Substrate-binding positions include 87–90 (SHNH) and Arg109. His88 (proton acceptor) is an active-site residue. Asp110 lines the Mg(2+) pocket. Gln237 is a substrate binding site. Asp265 is a binding site for Mg(2+). 309-311 (ESQ) provides a ligand contact to substrate. Residues Asp491 and Gly528 each coordinate ATP. Asn529 provides a ligand contact to Mg(2+). Ser531 serves as a coordination point for substrate.

It belongs to the FGAMS family. Monomer. Part of the FGAM synthase complex composed of 1 PurL, 1 PurQ and 2 PurS subunits.

It localises to the cytoplasm. The catalysed reaction is N(2)-formyl-N(1)-(5-phospho-beta-D-ribosyl)glycinamide + L-glutamine + ATP + H2O = 2-formamido-N(1)-(5-O-phospho-beta-D-ribosyl)acetamidine + L-glutamate + ADP + phosphate + H(+). It functions in the pathway purine metabolism; IMP biosynthesis via de novo pathway; 5-amino-1-(5-phospho-D-ribosyl)imidazole from N(2)-formyl-N(1)-(5-phospho-D-ribosyl)glycinamide: step 1/2. Functionally, part of the phosphoribosylformylglycinamidine synthase complex involved in the purines biosynthetic pathway. Catalyzes the ATP-dependent conversion of formylglycinamide ribonucleotide (FGAR) and glutamine to yield formylglycinamidine ribonucleotide (FGAM) and glutamate. The FGAM synthase complex is composed of three subunits. PurQ produces an ammonia molecule by converting glutamine to glutamate. PurL transfers the ammonia molecule to FGAR to form FGAM in an ATP-dependent manner. PurS interacts with PurQ and PurL and is thought to assist in the transfer of the ammonia molecule from PurQ to PurL. This Campylobacter lari (strain RM2100 / D67 / ATCC BAA-1060) protein is Phosphoribosylformylglycinamidine synthase subunit PurL.